A 114-amino-acid chain; its full sequence is Large ribosomal subunit protein uL22 (114 aa).

The protein belongs to the universal ribosomal protein uL22 family. In terms of assembly, part of the 50S ribosomal subunit.

In terms of biological role, this protein binds specifically to 23S rRNA; its binding is stimulated by other ribosomal proteins, e.g. L4, L17, and L20. It is important during the early stages of 50S assembly. It makes multiple contacts with different domains of the 23S rRNA in the assembled 50S subunit and ribosome. Functionally, the globular domain of the protein is located near the polypeptide exit tunnel on the outside of the subunit, while an extended beta-hairpin is found that lines the wall of the exit tunnel in the center of the 70S ribosome. This Streptococcus thermophilus (strain CNRZ 1066) protein is Large ribosomal subunit protein uL22.